Consider the following 152-residue polypeptide: Transcriptional regulator MraZ (152 aa).

SpoVT-AbrB domains follow at residues 5-52 and 81-124; these read ATLV…PLPE and ASEC…DEQT.

Belongs to the MraZ family. As to quaternary structure, forms oligomers.

It is found in the cytoplasm. It localises to the nucleoid. In terms of biological role, negatively regulates its own expression and that of the subsequent genes in the proximal part of the division and cell wall (dcw) gene cluster. Acts by binding directly to DNA. May also regulate the expression of genes outside the dcw cluster. The sequence is that of Transcriptional regulator MraZ from Pectobacterium carotovorum subsp. carotovorum (strain PC1).